The primary structure comprises 229 residues: Non-structural protein P8 (229 aa).

The CCM-I stretch occupies residues 14–26 (MKHNQDRVEELSL). A CCM-III region spans residues 94–116 (IKRHVNEQILPKLKSDLSELKKK). 2 helical membrane-spanning segments follow: residues 119 to 139 (IIHT…VCTL) and 162 to 182 (SLNP…MVCA). Residues 185 to 198 (ERALNQQIDMIKKE) form a CCM-II region.

This sequence belongs to the orbivirus NS3 family. In terms of assembly, forms homooligomers via coiled-coil motif. Interacts with host OPTN; this interaction inhibits innate immune response.

Its subcellular location is the host cell membrane. It localises to the host Golgi apparatus. Plays a role in the inhibition of host innate immune response. Interacts with host OPTN and thus inhibits the recruitment of TBK1 to the host Golgi apparatus. In turn, downstream partner IRF3 cannot be activated and IFN-beta production is impaired. Its function is as follows. Facilitates viral particle release either by increasing plasma membrane permeability through a viroporin-like activity or by viral budding. In Bluetongue virus 10 (isolate USA) (BTV 10), this protein is Non-structural protein P8 (Segment-10).